A 108-amino-acid chain; its full sequence is Replication initiation control protein YabA (108 aa).

Zn(2+) is bound by residues His83, Cys85, Cys99, and Cys102.

The protein belongs to the YabA family. In terms of assembly, homotetramer. Interacts with both DnaA and DnaN, acting as a bridge between these two proteins. Zn(2+) is required as a cofactor.

It is found in the cytoplasm. The protein localises to the nucleoid. Involved in control of chromosome replication initiation. Inhibits the cooperative binding of DnaA to the oriC region, thus negatively regulating initiation of chromosome replication. Inhibits the ability of DnaA-ATP to form a helix on DNA; does not disassemble preformed DnaA-DNA helices. Decreases the residence time of DnaA on the chromosome at its binding sites (oriC, replication forks and promoter-binding sites). Tethers DnaA to the replication machinery via the DNA polymerase beta sliding clamp subunit (dnaN). Associates with oriC and other DnaA targets on the chromosome in a DnaA-dependent manner. The sequence is that of Replication initiation control protein YabA from Lactococcus lactis subsp. lactis (strain IL1403) (Streptococcus lactis).